The primary structure comprises 344 residues: Holliday junction branch migration complex subunit RuvB (344 aa).

The segment at 1 to 183 (MPDRELISGD…FGLVLRLDPY (183 aa)) is large ATPase domain (RuvB-L). ATP contacts are provided by residues Leu-22, Arg-23, Gly-64, Lys-67, Thr-68, Thr-69, 130–132 (EDF), Arg-173, Tyr-183, and Arg-220. Thr-68 is a Mg(2+) binding site. The segment at 184 to 254 (NTEELKAIVK…VAQTALNLLD (71 aa)) is small ATPAse domain (RuvB-S). A head domain (RuvB-H) region spans residues 257–344 (RYGLDEIDQK…EGDHPSLFEA (88 aa)). DNA-binding residues include Arg-312 and Arg-317.

It belongs to the RuvB family. As to quaternary structure, homohexamer. Forms an RuvA(8)-RuvB(12)-Holliday junction (HJ) complex. HJ DNA is sandwiched between 2 RuvA tetramers; dsDNA enters through RuvA and exits via RuvB. An RuvB hexamer assembles on each DNA strand where it exits the tetramer. Each RuvB hexamer is contacted by two RuvA subunits (via domain III) on 2 adjacent RuvB subunits; this complex drives branch migration. In the full resolvosome a probable DNA-RuvA(4)-RuvB(12)-RuvC(2) complex forms which resolves the HJ.

The protein resides in the cytoplasm. The catalysed reaction is ATP + H2O = ADP + phosphate + H(+). Its function is as follows. The RuvA-RuvB-RuvC complex processes Holliday junction (HJ) DNA during genetic recombination and DNA repair, while the RuvA-RuvB complex plays an important role in the rescue of blocked DNA replication forks via replication fork reversal (RFR). RuvA specifically binds to HJ cruciform DNA, conferring on it an open structure. The RuvB hexamer acts as an ATP-dependent pump, pulling dsDNA into and through the RuvAB complex. RuvB forms 2 homohexamers on either side of HJ DNA bound by 1 or 2 RuvA tetramers; 4 subunits per hexamer contact DNA at a time. Coordinated motions by a converter formed by DNA-disengaged RuvB subunits stimulates ATP hydrolysis and nucleotide exchange. Immobilization of the converter enables RuvB to convert the ATP-contained energy into a lever motion, pulling 2 nucleotides of DNA out of the RuvA tetramer per ATP hydrolyzed, thus driving DNA branch migration. The RuvB motors rotate together with the DNA substrate, which together with the progressing nucleotide cycle form the mechanistic basis for DNA recombination by continuous HJ branch migration. Branch migration allows RuvC to scan DNA until it finds its consensus sequence, where it cleaves and resolves cruciform DNA. The protein is Holliday junction branch migration complex subunit RuvB of Solibacter usitatus (strain Ellin6076).